Consider the following 643-residue polypeptide: Threonine--tRNA ligase (643 aa).

The 61-residue stretch at 1–61 (MIKITLKDGS…NEDSSLEICT (61 aa)) folds into the TGS domain. The tract at residues 240–540 (DHNKLGRELG…LIEKYAGALP (301 aa)) is catalytic. Positions 335, 386, and 517 each coordinate Zn(2+).

The protein belongs to the class-II aminoacyl-tRNA synthetase family. In terms of assembly, homodimer. Zn(2+) is required as a cofactor.

The protein localises to the cytoplasm. It catalyses the reaction tRNA(Thr) + L-threonine + ATP = L-threonyl-tRNA(Thr) + AMP + diphosphate + H(+). Functionally, catalyzes the attachment of threonine to tRNA(Thr) in a two-step reaction: L-threonine is first activated by ATP to form Thr-AMP and then transferred to the acceptor end of tRNA(Thr). Also edits incorrectly charged L-seryl-tRNA(Thr). The protein is Threonine--tRNA ligase of Clostridium perfringens (strain SM101 / Type A).